The chain runs to 621 residues: 1-deoxy-D-xylulose-5-phosphate synthase (621 aa).

Thiamine diphosphate contacts are provided by residues His80 and 121 to 123 (GHS). Asp152 is a Mg(2+) binding site. Thiamine diphosphate is bound by residues 153–154 (GA), Asn181, Tyr288, and Glu370. Mg(2+) is bound at residue Asn181.

It belongs to the transketolase family. DXPS subfamily. Homodimer. Mg(2+) serves as cofactor. It depends on thiamine diphosphate as a cofactor.

The enzyme catalyses D-glyceraldehyde 3-phosphate + pyruvate + H(+) = 1-deoxy-D-xylulose 5-phosphate + CO2. Its pathway is metabolic intermediate biosynthesis; 1-deoxy-D-xylulose 5-phosphate biosynthesis; 1-deoxy-D-xylulose 5-phosphate from D-glyceraldehyde 3-phosphate and pyruvate: step 1/1. In terms of biological role, catalyzes the acyloin condensation reaction between C atoms 2 and 3 of pyruvate and glyceraldehyde 3-phosphate to yield 1-deoxy-D-xylulose-5-phosphate (DXP). The sequence is that of 1-deoxy-D-xylulose-5-phosphate synthase from Aeromonas hydrophila subsp. hydrophila (strain ATCC 7966 / DSM 30187 / BCRC 13018 / CCUG 14551 / JCM 1027 / KCTC 2358 / NCIMB 9240 / NCTC 8049).